A 209-amino-acid chain; its full sequence is Proteasome subunit beta (209 aa).

The propeptide at Met1–Gly10 is removed in mature form; by autocatalysis. The active-site Nucleophile is the Thr11.

It belongs to the peptidase T1B family. The 20S proteasome core is composed of 14 alpha and 14 beta subunits that assemble into four stacked heptameric rings, resulting in a barrel-shaped structure. The two inner rings, each composed of seven catalytic beta subunits, are sandwiched by two outer rings, each composed of seven alpha subunits. The catalytic chamber with the active sites is on the inside of the barrel. Has a gated structure, the ends of the cylinder being occluded by the N-termini of the alpha-subunits. Is capped at one or both ends by the proteasome regulatory ATPase, PAN.

The protein localises to the cytoplasm. It carries out the reaction Cleavage of peptide bonds with very broad specificity.. With respect to regulation, the formation of the proteasomal ATPase PAN-20S proteasome complex, via the docking of the C-termini of PAN into the intersubunit pockets in the alpha-rings, triggers opening of the gate for substrate entry. Interconversion between the open-gate and close-gate conformations leads to a dynamic regulation of the 20S proteasome proteolysis activity. Functionally, component of the proteasome core, a large protease complex with broad specificity involved in protein degradation. The protein is Proteasome subunit beta of Methanospirillum hungatei JF-1 (strain ATCC 27890 / DSM 864 / NBRC 100397 / JF-1).